The sequence spans 191 residues: Probable GTP-binding protein EngB (191 aa).

In terms of domain architecture, EngB-type G spans 22 to 191; that stretch reads DFDHFLILGR…KLINEEFSNE (170 aa). GTP is bound by residues 30 to 37, 57 to 61, 75 to 78, 142 to 145, and 172 to 174; these read GRSNVGKS, GKTIT, DAPG, TKYD, and TSS. Mg(2+)-binding residues include serine 37 and threonine 59.

This sequence belongs to the TRAFAC class TrmE-Era-EngA-EngB-Septin-like GTPase superfamily. EngB GTPase family. It depends on Mg(2+) as a cofactor.

Functionally, necessary for normal cell division and for the maintenance of normal septation. This Acholeplasma laidlawii (strain PG-8A) protein is Probable GTP-binding protein EngB.